The primary structure comprises 1799 residues: Putative neural-cadherin 2 (1799 aa).

Residues Asn13, Asn64, Asn86, Asn118, Asn195, Asn260, Asn264, Asn283, and Asn377 are each glycosylated (N-linked (GlcNAc...) asparagine). 7 consecutive Cadherin domains span residues 37–136, 137–252, 253–364, 368–485, 486–590, 590–709, and 708–812; these read DRFL…PPVF, DRQT…APQF, PQGI…PPQF, EWVT…VPKF, DREH…APTF, FAQD…QPGS, and GSKS…AGSM. N-linked (GlcNAc...) asparagine glycans are attached at residues Asn601, Asn793, Asn910, Asn948, and Asn969. An EGF-like 1 domain is found at 973–1010; that stretch reads QDHNCRTHLCYNGGRCVETRNGPKCVACPVGYNGPRCQ. Cystine bridges form between Cys977–Cys988, Cys982–Cys997, Cys1000–Cys1009, Cys1191–Cys1217, Cys1224–Cys1239, Cys1233–Cys1248, and Cys1250–Cys1259. In terms of domain architecture, Laminin G-like 1 spans 1011-1217; sequence QSTRSFRGNG…ALARNSFPAC (207 aa). The EGF-like 2 domain occupies 1220–1260; sequence TDEVCLKTEHTARCWEHGNCVASLVQAKCHCQPGWMGPGCN. The Laminin G-like 2 domain occupies 1263-1454; sequence TIPTTFKAQS…TMARNLERNC (192 aa). Asn1376 and Asn1437 each carry an N-linked (GlcNAc...) asparagine glycan. 4 disulfide bridges follow: Cys1419-Cys1454, Cys1501-Cys1512, Cys1506-Cys1523, and Cys1525-Cys1534. One can recognise an EGF-like 3; calcium-binding domain in the interval 1497 to 1535; that stretch reads DRNECLDLPCLNGATCINLEPRLRYRCICPEGYWGENCE. The helical transmembrane segment at 1549 to 1569 threads the bilayer; that stretch reads ALGAIFVCLIIILILALIFVL. Residues 1726 to 1799 are disordered; that stretch reads ASSQLPSDGG…PLPEVDKVVL (74 aa). Composition is skewed to gly residues over residues 1733-1744, 1752-1763, and 1775-1786; these read DGGGGSGDGPGP, LGGGGTGGGSGI, and SGAGPGGGGGSS.

It localises to the cell membrane. Functionally, cadherins are calcium-dependent cell adhesion proteins. They preferentially interact with themselves in a homophilic manner in connecting cells. The sequence is that of Putative neural-cadherin 2 (CadN2) from Drosophila melanogaster (Fruit fly).